The following is a 341-amino-acid chain: UDP-3-O-(3-hydroxymyristoyl)glucosamine N-acyltransferase (341 aa).

The Proton acceptor role is filled by His239.

Belongs to the transferase hexapeptide repeat family. LpxD subfamily. As to quaternary structure, homotrimer.

It catalyses the reaction a UDP-3-O-[(3R)-3-hydroxyacyl]-alpha-D-glucosamine + a (3R)-hydroxyacyl-[ACP] = a UDP-2-N,3-O-bis[(3R)-3-hydroxyacyl]-alpha-D-glucosamine + holo-[ACP] + H(+). The enzyme catalyses UDP-3-O-[(3R)-3-hydroxytetradecanoyl]-alpha-D-glucosamine + (3R)-hydroxytetradecanoyl-[ACP] = UDP-2-N,3-O-bis[(3R)-3-hydroxytetradecanoyl]-alpha-D-glucosamine + holo-[ACP] + H(+). It participates in glycolipid biosynthesis; lipid IV(A) biosynthesis; lipid IV(A) from (3R)-3-hydroxytetradecanoyl-[acyl-carrier-protein] and UDP-N-acetyl-alpha-D-glucosamine: step 3/6. In terms of biological role, catalyzes the N-acylation of UDP-3-O-(hydroxytetradecanoyl)glucosamine using 3-hydroxytetradecanoyl-ACP as the acyl donor. Is involved in the biosynthesis of lipid A, a phosphorylated glycolipid that anchors the lipopolysaccharide to the outer membrane of the cell. The polypeptide is UDP-3-O-(3-hydroxymyristoyl)glucosamine N-acyltransferase (Escherichia coli (strain UTI89 / UPEC)).